The chain runs to 277 residues: NH(3)-dependent NAD(+) synthetase (277 aa).

36–43 (GLSGGIDS) is a binding site for ATP. Mg(2+) is bound at residue aspartate 42. Arginine 118 is a binding site for deamido-NAD(+). Threonine 138 contributes to the ATP binding site. Residue glutamate 143 participates in Mg(2+) binding. ATP contacts are provided by lysine 167 and serine 189.

It belongs to the NAD synthetase family. Homodimer.

The enzyme catalyses deamido-NAD(+) + NH4(+) + ATP = AMP + diphosphate + NAD(+) + H(+). The protein operates within cofactor biosynthesis; NAD(+) biosynthesis; NAD(+) from deamido-NAD(+) (ammonia route): step 1/1. Catalyzes the ATP-dependent amidation of deamido-NAD to form NAD. Uses ammonia as a nitrogen source. The polypeptide is NH(3)-dependent NAD(+) synthetase (Chlorobium phaeobacteroides (strain DSM 266 / SMG 266 / 2430)).